A 232-amino-acid chain; its full sequence is Ribosomal RNA small subunit methyltransferase G (232 aa).

Residues G75, F80, 126-127 (AE), and R143 contribute to the S-adenosyl-L-methionine site.

It belongs to the methyltransferase superfamily. RNA methyltransferase RsmG family.

Its subcellular location is the cytoplasm. Functionally, specifically methylates the N7 position of a guanine in 16S rRNA. This is Ribosomal RNA small subunit methyltransferase G from Fusobacterium nucleatum subsp. nucleatum (strain ATCC 25586 / DSM 15643 / BCRC 10681 / CIP 101130 / JCM 8532 / KCTC 2640 / LMG 13131 / VPI 4355).